A 265-amino-acid chain; its full sequence is NADH-ubiquinone oxidoreductase chain 5 (265 aa).

Helical transmembrane passes span 10-30, 50-70, 92-112, 113-133, 153-173, 183-203, 215-235, and 244-264; these read ISFY…LKFL, IVMT…VLLI, ILLV…PNLI, SILL…IYFQ, VALL…YIFY, MMII…QIPF, TPVS…YLLI, and WWMA…AGLG.

Belongs to the complex I subunit 5 family.

Its subcellular location is the mitochondrion inner membrane. It carries out the reaction a ubiquinone + NADH + 5 H(+)(in) = a ubiquinol + NAD(+) + 4 H(+)(out). Its function is as follows. Core subunit of the mitochondrial membrane respiratory chain NADH dehydrogenase (Complex I) that is believed to belong to the minimal assembly required for catalysis. Complex I functions in the transfer of electrons from NADH to the respiratory chain. The immediate electron acceptor for the enzyme is believed to be ubiquinone. The polypeptide is NADH-ubiquinone oxidoreductase chain 5 (ND5) (Anopheles quadriannulatus (Mosquito)).